A 477-amino-acid chain; its full sequence is Glycogen synthase 1 (477 aa).

Residue Lys-15 coordinates ADP-alpha-D-glucose.

It belongs to the glycosyltransferase 1 family. Bacterial/plant glycogen synthase subfamily.

It carries out the reaction [(1-&gt;4)-alpha-D-glucosyl](n) + ADP-alpha-D-glucose = [(1-&gt;4)-alpha-D-glucosyl](n+1) + ADP + H(+). Its pathway is glycan biosynthesis; glycogen biosynthesis. Synthesizes alpha-1,4-glucan chains using ADP-glucose. The sequence is that of Glycogen synthase 1 (glgA1) from Synechocystis sp. (strain ATCC 27184 / PCC 6803 / Kazusa).